Reading from the N-terminus, the 634-residue chain is Probable potassium transport system protein Kup (634 aa).

The next 12 membrane-spanning stretches (helical) occupy residues 19–39 (AVGL…TSPL), 62–82 (VLSL…VIFV), 113–133 (FVVV…MITP), 150–170 (GLEH…FLIQ), 177–197 (IGIL…ALGV), 225–245 (IGVA…ALYA), 259–279 (WFLL…ATIL), 291–311 (LLAP…ATVI), 349–369 (IYIG…VLGF), 379–399 (YGVA…VVIW), 406–426 (LWLG…FFAA), and 431–451 (VVQG…LMST).

The protein belongs to the HAK/KUP transporter (TC 2.A.72) family.

Its subcellular location is the cell inner membrane. The enzyme catalyses K(+)(in) + H(+)(in) = K(+)(out) + H(+)(out). Its function is as follows. Transport of potassium into the cell. Likely operates as a K(+):H(+) symporter. This Pseudomonas paraeruginosa (strain DSM 24068 / PA7) (Pseudomonas aeruginosa (strain PA7)) protein is Probable potassium transport system protein Kup.